The sequence spans 306 residues: uncharacterized protein (306 aa).

9 helical membrane passes run 6–26, 37–57, 67–87, 91–111, 125–145, 148–168, 177–197, 213–233, and 251–271; these read VQIM…FPGI, HLAL…AVLT, IPAI…LLNI, TVSA…SAML, WLGS…AGDF, SMSG…YFVF, GFIP…LVFL, LSIV…LAYV, and ALAL…LSLL. 2 consecutive EamA domains span residues 17 to 140 and 160 to 285; these read GLWA…LIAF and FSES…FTYL.

This sequence belongs to the EamA transporter family.

It is found in the cell membrane. This is an uncharacterized protein from Bacillus subtilis (strain 168).